Here is a 341-residue protein sequence, read N- to C-terminus: S-adenosylmethionine:tRNA ribosyltransferase-isomerase (341 aa).

Belongs to the QueA family. In terms of assembly, monomer.

The protein resides in the cytoplasm. The catalysed reaction is 7-aminomethyl-7-carbaguanosine(34) in tRNA + S-adenosyl-L-methionine = epoxyqueuosine(34) in tRNA + adenine + L-methionine + 2 H(+). It functions in the pathway tRNA modification; tRNA-queuosine biosynthesis. Its function is as follows. Transfers and isomerizes the ribose moiety from AdoMet to the 7-aminomethyl group of 7-deazaguanine (preQ1-tRNA) to give epoxyqueuosine (oQ-tRNA). The protein is S-adenosylmethionine:tRNA ribosyltransferase-isomerase of Clostridium botulinum (strain ATCC 19397 / Type A).